A 1593-amino-acid chain; its full sequence is MVKINFQIKKKKSNGPNFIGFDAVRVSVASPDQIKTWSYGEVKKPETINYRTFKPERDGLFCNRIFGPTKDWECHCGKYKYIKYKGTICDRCGVEVTESKVRRERFGHINLAVPVAHLWFLKKPPSRVGILLNMKISDLEKVIYYAKYIVMGDLKDRSGISFFARKGMLMGGEDFNLFKYGINNPIVKEEFKNIFDGIVCEEIKLDSNLTKALKQLKVLVKGQADSAGISTEEAAKKILENVKKGDIYYKVYFKPHSVYYYIDLDPSSHGEIKKILSEKFEKSSTVSITETDKKIRIEFFDIEKDKIYNDLRKDSFALKKYEGCLRIEILKNKIPFIENFSRSDSFVLLEESDINNIQNGFGDSLKVNIGAEAVRSLLEEINLDDEMKNIYAEIKKTKSDAERARLLRKLRVVEGFLNSQTRPEWMILTVLPVIPPDLRPLVALDGGRFATSDLNDLYRRIINRNNRLRHIEQLKAPIVMINNEKRLLQEAVDALIDNDSRMRPVTGAGNRILKSLSDTLKGKRGRFRQNLLGKRVDYSGRSVIVVGPNLRLNQCGIPKEMALELFKPFIVKELIKQENITLRSAKRMLERGDLKVWNILEKVTQSHPVLLNRAPTLHRLGIQAFEPVLVEGKSIQLHPLTCSAFNADFDGDQMAVHLPISLEAQLEARVLMMATRNILSPASGRPIAVPSQDMVLGNCYLTKEKYGVVGEGKVFSSVSEAISAYQAEKVDLQARIKVAGITSIRDKNLNNDDEQPDVTKWKNCKSEDDTEIINYTTVGRIIFNEQLPKNDDGSYALEYQNKSMTKKELVALVDRCYKELGQFKTTVLLDEIKRIGYKYATLAGISISIDEMKVPTEKEKMVREAKTKISEIEKQAKLGLITESERYNRIIDIWTRVTDEISDIMFDEMRKEETKAYKPGQNRFNSIFMMADSGSRGSRQQVRQLAGMRGLMAKPQKKLTGGIGEIIETPIISNFREGLTVLEYFISTHGGRKGLADTALKTAEAGYLTRRLVDVAHDVVVREEDCGTVNGVFIGTLRCGDEIIEKIDERVVGRTALDNVVDIVHDDLIIKRGELITPKKAEKLVEAGIDKIGIRSVLTCESGHGVCAKCYGVNPATGEQVEMGEAVGILAAQSIGEPGTQLTLRTFHIGGAASRVVQRSEVYAENNGTVNYYNLKTIQNKDGETIVLSRNAELVYTEYPVYRKQIYQIPYGAVIKIYDGQTVEIRVNPITGMKKDILIAKWDPHSKPIISEFDGTVNFVDVKDGVTLQREKSKITGQIERVIIEHSSDRRSPRIVVKKDDGSVVEYPLPVDTTLVVRDKDRVKSGDILAKIPQEISRTKDITGGLPRVAELFEGRRPRNVAVVSEIDGIVHLVGPTVKGNVKVEVENPETKMKKSYLVRAGRHLVVYEGDRVKEGEALSDGAINPHDILKVKGPKEVQEYLVNEIQQVYRLQGVSINDKHIEIIVRQMLSNVRITDSGDSHYLNGEIVSRYKYEIDRKAIKGKKGKAPIAHSILLGITKASLSSDSFISAASFQETTRILTEAAVSGQVDYLKGLKENVSIGRLIPAGTGLAAVDIDDNNKFYSREQNDAND.

Zn(2+) is bound by residues Cys74, Cys76, Cys89, and Cys92. Residues Asp648, Asp650, and Asp652 each coordinate Mg(2+). The Zn(2+) site is built by Cys1026, Cys1100, Cys1107, and Cys1110.

It belongs to the RNA polymerase beta' chain family. The RNAP catalytic core consists of 2 alpha, 1 beta, 1 beta' and 1 omega subunit. When a sigma factor is associated with the core the holoenzyme is formed, which can initiate transcription. Requires Mg(2+) as cofactor. Zn(2+) is required as a cofactor.

The enzyme catalyses RNA(n) + a ribonucleoside 5'-triphosphate = RNA(n+1) + diphosphate. In terms of biological role, DNA-dependent RNA polymerase catalyzes the transcription of DNA into RNA using the four ribonucleoside triphosphates as substrates. This Endomicrobium trichonymphae protein is DNA-directed RNA polymerase subunit beta'.